Consider the following 1059-residue polypeptide: Isoleucine--tRNA ligase (1059 aa).

The 'HIGH' region motif lies at 59–69; the sequence is PFANGLPHYGH. Residues 637–641 carry the 'KMSKS' region motif; sequence KMSKS. An ATP-binding site is contributed by K640.

The protein belongs to the class-I aminoacyl-tRNA synthetase family. IleS type 2 subfamily. As to quaternary structure, monomer. Requires Zn(2+) as cofactor.

Its subcellular location is the cytoplasm. It catalyses the reaction tRNA(Ile) + L-isoleucine + ATP = L-isoleucyl-tRNA(Ile) + AMP + diphosphate. Functionally, catalyzes the attachment of isoleucine to tRNA(Ile). As IleRS can inadvertently accommodate and process structurally similar amino acids such as valine, to avoid such errors it has two additional distinct tRNA(Ile)-dependent editing activities. One activity is designated as 'pretransfer' editing and involves the hydrolysis of activated Val-AMP. The other activity is designated 'posttransfer' editing and involves deacylation of mischarged Val-tRNA(Ile). The polypeptide is Isoleucine--tRNA ligase (Mycobacterium leprae (strain TN)).